A 232-amino-acid chain; its full sequence is 2-C-methyl-D-erythritol 4-phosphate cytidylyltransferase (232 aa).

Belongs to the IspD/TarI cytidylyltransferase family. IspD subfamily.

The enzyme catalyses 2-C-methyl-D-erythritol 4-phosphate + CTP + H(+) = 4-CDP-2-C-methyl-D-erythritol + diphosphate. Its pathway is isoprenoid biosynthesis; isopentenyl diphosphate biosynthesis via DXP pathway; isopentenyl diphosphate from 1-deoxy-D-xylulose 5-phosphate: step 2/6. Functionally, catalyzes the formation of 4-diphosphocytidyl-2-C-methyl-D-erythritol from CTP and 2-C-methyl-D-erythritol 4-phosphate (MEP). The sequence is that of 2-C-methyl-D-erythritol 4-phosphate cytidylyltransferase from Stenotrophomonas maltophilia (strain K279a).